The primary structure comprises 221 residues: Intraflagellar transport-associated protein (221 aa).

At Ser59 the chain carries Phosphoserine.

As to quaternary structure, interacts with IFT122; the interaction associates IFTAP with IFT-A complex.

Functionally, seems to play a role in ciliary BBSome localization, maybe through interaction with IFT-A complex. In Homo sapiens (Human), this protein is Intraflagellar transport-associated protein.